Reading from the N-terminus, the 144-residue chain is Protein CT_635 (144 aa).

The tract at residues 110–144 (EVTNDIGHSSHKSPTPKKTKSSSQKKSKKKNWIPL) is disordered. The segment covering 118–144 (SSHKSPTPKKTKSSSQKKSKKKNWIPL) has biased composition (basic residues).

The protein belongs to the chlamydial CPn_0742/CT_635/TC_0003 family.

This chain is Protein CT_635, found in Chlamydia trachomatis serovar D (strain ATCC VR-885 / DSM 19411 / UW-3/Cx).